The primary structure comprises 1631 residues: MGSVGLLGLLLLRLSVTASGSGAGTGSGTGSGTGTGTGQLVGSPATGPALQPREPLSYSRLQRKSLAVDFVVPSLFRVYARDLLLPPWSSSEPRAGWTEARGSLALDCAPLLRLLGPPPGVSWAEGASSPAPAQARTLTRVLKGGSVRKLRRAKQLVLELGEEAILEGCVGPSPEEVTAGLLQFNLSELFSWWIRHGEGRLRIRLMPEKKASAVGREGRLSAAIRASQPRLLFQILGTGHSSLESPTSLPSPPPDPFAWNLTWIMKDSFPFLSHRSRYGLECSFDFPCELEYSPPLHDLGNQSWSWRRVPSEEASQMDLLDGPETEHSKEMPRGSFLLLNTSANSKHTILSPWMRSSSEHCKLAVSVHRHLQPSGRYVAQLLPHNEPGREILLVPTPGKHGWTVLQGRIGRPENPFRVALEYISSGNRSLSAVDFFALKNCSEGTSPGSKMALQSSFTCWNGTVLQLGQACDFHQDCAQGEDEGQLCSQLPAGFYCNFENGFCGWSQGILTPHNPRWQVRTLKDARVQDHRGHALSLSTTDVPTSESATVTSATFPAPMKNSPCELRMSWLIHGVLRGNVSLVLVENKTGKEQSRMVWHVATNEGLSLWQWTVLPLLDVADRFWLQIVAWWGQGSRATVAFDNISISLDCYLTISGEEKMLQNTAPKSRNLFERNPNKDPRPWENTRETPVFDPTVHWLFTTCGASGPHGPTQAQCNNAYRNSNLSVVVGSEGPLKGIQTWKVPATDTYSISGYGAAGGKGGKNTMMRSHGVSVLGIFNLEKGDTLYILVGQQGEDACPSTNRLIQKVCIGENNVIEEEIRVNRSVHEWAGGGGGGGGATYVFKMKDGVPVPLIIAAGGGGRAYGAKTDTFHPERLENNSSVLGLNGNSGAAGGGGGWNDNTSLLWSGKSLLEGATGGHSCPQAMKKWGWETRGGFGGGGGGCSSGGGGGGYIGGNAASNNDPEMDGEDGVSFISPLGILYTPALKVMEGHGEVNIKHYLNCSHCEGDECHMDPESHKVICFCDHGTVLAEDGVSCIVSPTPEPHLPLSLVLSVVTSALVAALVLAFSGIMIVYRRKHQELQAMQMELQSPEYKLSKLRTSTIMTDYNPNYCFAGKTSSISDLKEVPRKNITLIRGLGHGAFGEVYEGQVSGVPSDPSPLQVAVKTLPEVCSEQDELDFLMEALIISKFNHQNIVRCIGVSLQALPRFILLELMAGGDLKSFLRETRPRPNQPSSLAMLDLLHVAQDIACGCQYLEENHFIHRDIAARNCLLTCPGPGRVAKIGDFGMARDIYRASYYRKGGCAMLPVKWMPPEAFMEGIFTSKTDTWSFGVLLWEIFSLGYMPYPSKSNQEVLEFVTSGGRMDPPKNCPGPVYRIMTQCWQHQPEDRPNFAIILERIEYCTQDPDVINTALPVEYGPLMEEEEKVPMRPQDPEGIPPLLVSPPQAKREEGPDPAAPPPLPSTSSGKAAKKPTAAELSGRVTRGPAVEGGHVNMAFSQSNPASELHKVQGSRNKPTSLWNPTYGSWFTEKPTKKNNPPATKGHHDRGNLGREGSCTVPPNVAAGRLPGASLLLEPSSLTASMKEVPLFRLRHFPCGNVNYGYQQQGLPFEGTTAPGSSQYEDALLKTPPGP.

Residues 1–18 form the signal peptide; the sequence is MGSVGLLGLLLLRLSVTA. The Extracellular portion of the chain corresponds to 19 to 1053; the sequence is SGSGAGTGSG…PHLPLSLVLS (1035 aa). Positions 20-53 are disordered; it reads GSGAGTGSGTGSGTGTGTGQLVGSPATGPALQPR. The span at 21–39 shows a compositional bias: gly residues; it reads SGAGTGSGTGSGTGTGTGQ. A heparin-binding region region spans residues 60 to 82; it reads RLQRKSLAVDFVVPSLFRVYARD. N-linked (GlcNAc...) asparagine glycosylation is found at N185, N260, N301, N340, N427, N440, N461, N579, N587, and N643. In terms of domain architecture, MAM 1 spans 280–443; the sequence is LECSFDFPCE…DFFALKNCSE (164 aa). In terms of domain architecture, MAM 2 spans 494–652; sequence FYCNFENGFC…NISISLDCYL (159 aa). Residues C703 and C716 are joined by a disulfide bond. N724 carries N-linked (GlcNAc...) asparagine glycosylation. Residues C798 and C809 are joined by a disulfide bond. N-linked (GlcNAc...) asparagine glycosylation is found at N823, N878, N879, and N901. A disulfide bond links C921 and C943. N1001 is a glycosylation site (N-linked (GlcNAc...) asparagine). 3 disulfide bridges follow: C1002/C1010, C1005/C1021, and C1023/C1036. The segment at 1002-1040 is EGF-like; sequence CSHCEGDECHMDPESHKVICFCDHGTVLAEDGVSCIVSP. A helical transmembrane segment spans residues 1054–1074; the sequence is VVTSALVAALVLAFSGIMIVY. The Cytoplasmic segment spans residues 1075–1631; that stretch reads RRKHQELQAM…DALLKTPPGP (557 aa). The Protein kinase domain maps to 1131-1407; sequence ITLIRGLGHG…IEYCTQDPDV (277 aa). ATP contacts are provided by residues 1137–1145 and K1165; that span reads LGHGAFGEV. The active-site Proton acceptor is the D1264. 3 disordered regions span residues 1423–1493, 1526–1554, and 1609–1631; these read EEKV…GHVN, WFTE…REGS, and FEGT…PPGP.

In terms of assembly, homodimer; homodimerizes following heparin- and ligand-binding. Interacts with CBL, IRS1, PIK3R1 and PLCG1. Interacts with FRS2 and SHC1. Interacts with PTN and MDK. Post-translationally, phosphorylated at tyrosine residues by autocatalysis, which activates kinase activity. In cells not stimulated by a ligand, receptor protein tyrosine phosphatase beta and zeta complex (PTPRB/PTPRZ1) dephosphorylates ALK at the sites in ALK that are undergoing autophosphorylation through autoactivation.

It is found in the cell membrane. The enzyme catalyses L-tyrosyl-[protein] + ATP = O-phospho-L-tyrosyl-[protein] + ADP + H(+). Its activity is regulated as follows. Activated upon ALKAL2 ligand-binding. ALKAL2-driven activation is coupled with heparin-binding. Following ligand-binding, homodimerizes and autophosphorylates, activating its kinase activity. Inactivated through dephosphorylation by receptor protein tyrosine phosphatase beta and zeta complex (PTPRB/PTPRZ1) when there is no stimulation by a ligand. Neuronal receptor tyrosine kinase that is essentially and transiently expressed in specific regions of the central and peripheral nervous systems and plays an important role in the genesis and differentiation of the nervous system. Also acts as a key thinness protein involved in the resistance to weight gain: in hypothalamic neurons, controls energy expenditure acting as a negative regulator of white adipose tissue lipolysis and sympathetic tone to fine-tune energy homeostasis. Following activation by ALKAL2 ligand at the cell surface, transduces an extracellular signal into an intracellular response. In contrast, ALKAL1 is not a potent physiological ligand for ALK. Ligand-binding to the extracellular domain induces tyrosine kinase activation, leading to activation of the mitogen-activated protein kinase (MAPK) pathway. Phosphorylates almost exclusively at the first tyrosine of the Y-x-x-x-Y-Y motif. Induces tyrosine phosphorylation of CBL, FRS2, IRS1 and SHC1, as well as of the MAP kinases MAPK1/ERK2 and MAPK3/ERK1. ALK activation may also be regulated by pleiotrophin (PTN) and midkine (MDK). PTN-binding induces MAPK pathway activation, which is important for the anti-apoptotic signaling of PTN and regulation of cell proliferation. MDK-binding induces phosphorylation of the ALK target insulin receptor substrate (IRS1), activates mitogen-activated protein kinases (MAPKs) and PI3-kinase, resulting also in cell proliferation induction. Drives NF-kappa-B activation, probably through IRS1 and the activation of the AKT serine/threonine kinase. Recruitment of IRS1 to activated ALK and the activation of NF-kappa-B are essential for the autocrine growth and survival signaling of MDK. The polypeptide is ALK tyrosine kinase receptor (Canis lupus familiaris (Dog)).